The sequence spans 277 residues: Uridine-cytidine kinase 1 (277 aa).

24 to 32 (GGTASGKST) is an ATP binding site. Residues Asp81, Tyr109, His114, Arg163, Arg172, and Gln180 each contribute to the substrate site. ATP is bound at residue Asp209. A disordered region spans residues 241-277 (NHGRSLKRGVAEHGENPSGSSSNLTKRPLLEPSTRPH).

Belongs to the uridine kinase family.

The catalysed reaction is uridine + ATP = UMP + ADP + H(+). It catalyses the reaction cytidine + ATP = CMP + ADP + H(+). The protein operates within pyrimidine metabolism; CTP biosynthesis via salvage pathway; CTP from cytidine: step 1/3. It functions in the pathway pyrimidine metabolism; UMP biosynthesis via salvage pathway; UMP from uridine: step 1/1. Its function is as follows. Phosphorylates uridine and cytidine to uridine monophosphate and cytidine monophosphate. Does not phosphorylate deoxyribonucleosides or purine ribonucleosides. Can use ATP or GTP as a phosphate donor. This is Uridine-cytidine kinase 1 (uck1) from Danio rerio (Zebrafish).